The following is a 199-amino-acid chain: Putative 3-methyladenine DNA glycosylase (199 aa).

Belongs to the DNA glycosylase MPG family.

The polypeptide is Putative 3-methyladenine DNA glycosylase (Rhizobium etli (strain ATCC 51251 / DSM 11541 / JCM 21823 / NBRC 15573 / CFN 42)).